The sequence spans 363 residues: Galactokinase (363 aa).

A substrate-binding site is contributed by 16 to 19 (EHTD). ATP is bound by residues serine 50 and 103–109 (GSGLSSS). 2 residues coordinate Mg(2+): serine 109 and glutamate 141. The active-site Proton acceptor is the aspartate 153. Tyrosine 205 is a substrate binding site.

This sequence belongs to the GHMP kinase family. GalK subfamily.

The protein localises to the cytoplasm. It carries out the reaction alpha-D-galactose + ATP = alpha-D-galactose 1-phosphate + ADP + H(+). Its pathway is carbohydrate metabolism; galactose metabolism. In terms of biological role, catalyzes the transfer of the gamma-phosphate of ATP to D-galactose to form alpha-D-galactose-1-phosphate (Gal-1-P). The polypeptide is Galactokinase (Mycobacterium tuberculosis (strain ATCC 25177 / H37Ra)).